Here is a 309-residue protein sequence, read N- to C-terminus: Dihydroorotate dehydrogenase B (NAD(+)), catalytic subunit (309 aa).

Residues Ser-21 and 45–46 (KA) each bind FMN. Substrate is bound by residues Lys-45 and 69–73 (NAIGL). The FMN site is built by Asn-99 and Asn-127. Asn-127 is a substrate binding site. The active-site Nucleophile is Cys-130. FMN contacts are provided by Lys-165 and Ile-191. 192–193 (NT) contacts substrate. Residues Gly-217, 243–244 (GG), and 265–266 (GT) contribute to the FMN site.

This sequence belongs to the dihydroorotate dehydrogenase family. Type 1 subfamily. Heterotetramer of 2 PyrK and 2 PyrD type B subunits. It depends on FMN as a cofactor.

The protein localises to the cytoplasm. The catalysed reaction is (S)-dihydroorotate + NAD(+) = orotate + NADH + H(+). It functions in the pathway pyrimidine metabolism; UMP biosynthesis via de novo pathway; orotate from (S)-dihydroorotate (NAD(+) route): step 1/1. In terms of biological role, catalyzes the conversion of dihydroorotate to orotate with NAD(+) as electron acceptor. This is Dihydroorotate dehydrogenase B (NAD(+)), catalytic subunit (pyrD) from Bacillus cytotoxicus (strain DSM 22905 / CIP 110041 / 391-98 / NVH 391-98).